A 261-amino-acid polypeptide reads, in one-letter code: tRNA pseudouridine synthase A (261 aa).

Residue D51 is the Nucleophile of the active site. Substrate is bound at residue Y109.

The protein belongs to the tRNA pseudouridine synthase TruA family. In terms of assembly, homodimer.

The catalysed reaction is uridine(38/39/40) in tRNA = pseudouridine(38/39/40) in tRNA. In terms of biological role, formation of pseudouridine at positions 38, 39 and 40 in the anticodon stem and loop of transfer RNAs. This is tRNA pseudouridine synthase A from Photobacterium profundum (strain SS9).